Consider the following 421-residue polypeptide: Cytochrome c biogenesis protein Ccs1 (421 aa).

3 helical membrane passes run 12 to 32, 71 to 91, and 157 to 177; these read LRFAIFILLVIAAFSVIGTVI, TWWFITLILLFGISLLTCTLL, and IAPIIVHFSMIIILIGAIIGS.

Belongs to the Ccs1/CcsB family. In terms of assembly, may interact with CcsA.

The protein resides in the plastid. It is found in the chloroplast thylakoid membrane. Its function is as follows. Required during biogenesis of c-type cytochromes (cytochrome c6 and cytochrome f) at the step of heme attachment. This is Cytochrome c biogenesis protein Ccs1 from Thalassiosira pseudonana (Marine diatom).